A 214-amino-acid polypeptide reads, in one-letter code: NADH-quinone oxidoreductase subunit C (214 aa).

The protein belongs to the complex I 30 kDa subunit family. As to quaternary structure, NDH-1 is composed of 14 different subunits. Subunits NuoB, C, D, E, F, and G constitute the peripheral sector of the complex.

The protein resides in the cell inner membrane. It carries out the reaction a quinone + NADH + 5 H(+)(in) = a quinol + NAD(+) + 4 H(+)(out). NDH-1 shuttles electrons from NADH, via FMN and iron-sulfur (Fe-S) centers, to quinones in the respiratory chain. The immediate electron acceptor for the enzyme in this species is believed to be ubiquinone. Couples the redox reaction to proton translocation (for every two electrons transferred, four hydrogen ions are translocated across the cytoplasmic membrane), and thus conserves the redox energy in a proton gradient. This Francisella tularensis subsp. tularensis (strain WY96-3418) protein is NADH-quinone oxidoreductase subunit C.